A 400-amino-acid chain; its full sequence is Argininosuccinate synthase (400 aa).

Residues alanine 10–serine 18 and alanine 38 contribute to the ATP site. Residue tyrosine 89 participates in L-citrulline binding. ATP is bound at residue glycine 119. L-aspartate is bound by residues threonine 121, asparagine 125, and aspartate 126. Asparagine 125 contributes to the L-citrulline binding site. Residues arginine 129, serine 177, serine 186, glutamate 262, and tyrosine 274 each contribute to the L-citrulline site.

It belongs to the argininosuccinate synthase family. Type 1 subfamily. As to quaternary structure, homotetramer.

It localises to the cytoplasm. The enzyme catalyses L-citrulline + L-aspartate + ATP = 2-(N(omega)-L-arginino)succinate + AMP + diphosphate + H(+). The protein operates within amino-acid biosynthesis; L-arginine biosynthesis; L-arginine from L-ornithine and carbamoyl phosphate: step 2/3. The polypeptide is Argininosuccinate synthase (Prochlorococcus marinus (strain NATL1A)).